The chain runs to 1079 residues: Extracellular calcium-sensing receptor (1079 aa).

Residues 1 to 19 (MAFSSCCWILLALTWCTSA) form the signal peptide. The Extracellular portion of the chain corresponds to 20–610 (YGPDQRAQKK…KEIEFLSWTE (591 aa)). Residues 22 to 188 (PDQRAQKKGD…QFKSFLRTIP (167 aa)) form a ligand-binding 1 (LB1) region. Cysteine 60 and cysteine 101 are joined by a disulfide. 66 to 70 (RGFRW) provides a ligand contact to phosphate. Ca(2+)-binding residues include isoleucine 81, serine 84, leucine 87, and leucine 88. A glycan (N-linked (GlcNAc...) asparagine) is linked at asparagine 90. Residue threonine 100 participates in Ca(2+) binding. An N-linked (GlcNAc...) asparagine glycan is attached at asparagine 130. Residue threonine 145 coordinates Ca(2+). Residues serine 147, alanine 168, and serine 170 each coordinate L-tryptophan. Ca(2+) contacts are provided by serine 170, proline 188, aspartate 190, glutamate 231, and aspartate 234. The ligand-binding 2 (LB2) stretch occupies residues 189–324 (NDEHQATAMA…GGTIGFALKA (136 aa)). 7 disulfides stabilise this stretch: cysteine 236–cysteine 561, cysteine 358–cysteine 395, cysteine 437–cysteine 449, cysteine 542–cysteine 562, cysteine 546–cysteine 565, cysteine 568–cysteine 582, and cysteine 585–cysteine 598. Spermine-binding residues include aspartate 238 and serine 240. N-linked (GlcNAc...) asparagine glycans are attached at residues asparagine 261 and asparagine 287. A Ca(2+)-binding site is contributed by glutamate 297. Glutamate 297 is a binding site for L-tryptophan. Asparagine 386 and asparagine 400 each carry an N-linked (GlcNAc...) asparagine glycan. 415–417 (RIS) contacts phosphate. N-linked (GlcNAc...) asparagine glycosylation is found at asparagine 446, asparagine 468, and asparagine 488. Position 489 (tyrosine 489) interacts with Ca(2+). Residue asparagine 541 is glycosylated (N-linked (GlcNAc...) asparagine). The interval 542 to 612 (CSRDCLAGTR…IEFLSWTEPF (71 aa)) is cysteine-rich (CR). Glycine 557 serves as a coordination point for Ca(2+). A glycan (N-linked (GlcNAc...) asparagine) is linked at asparagine 594. Residues 611–636 (PFGIALTLFAVLGIFLTAFVLGVFIK) traverse the membrane as a helical segment. The Cytoplasmic segment spans residues 637-648 (FRNTPIVKATNR). The tract at residues 637 to 648 (FRNTPIVKATNR) is intracellular loop 1 (ICL1). A helical transmembrane segment spans residues 649-668 (ELSYLLLFSLLCCFSSSLFF). Topologically, residues 669 to 674 (IGEPQD) are extracellular. A helical membrane pass occupies residues 675-698 (WTCRLRQPAFGISFVLCISCILVK). Residues 699–722 (TNRVLLVFEAKIPTSFHRKWWGLN) are Cytoplasmic-facing. An intracellular loop 2 (ICL2) region spans residues 699-722 (TNRVLLVFEAKIPTSFHRKWWGLN). A helical membrane pass occupies residues 723–745 (LQFLLVFLCTFMQIVICAIWLYT). The Extracellular segment spans residues 746–769 (APPSSYRNHELEDEIIFITCHEGS). The chain crosses the membrane as a helical span at residues 770 to 789 (LMALGFLIGYTCLLAAICFF). The Cytoplasmic segment spans residues 790–805 (FAFKSRKLPENFNEAK). Residues 790–805 (FAFKSRKLPENFNEAK) are intracellular loop 3 (ICL3). A helical transmembrane segment spans residues 806 to 828 (FITFSMLIFFIVWISFIPAYAST). Residues 829–832 (YGKF) lie on the Extracellular side of the membrane. A helical transmembrane segment spans residues 833–854 (VSAVEVIAILAASFGLLACIFF). Over 855 to 1079 (NKVYIILFKP…STVTENMLHS (225 aa)) the chain is Cytoplasmic. The interval 855 to 1079 (NKVYIILFKP…STVTENMLHS (225 aa)) is C-terminus. The segment at 880–900 (AFKVAARATLRRSNVSRQRSS) is interaction with RNF19A. The residue at position 888 (threonine 888) is a Phosphothreonine. The interval 890 to 898 (RRSNVSRQR) is arginine-rich retention motif. Residues serine 892, serine 899, and serine 920 each carry the phosphoserine modification. The segment covering 892–918 (SNVSRQRSSSLGGSTGSTPSSSISSKS) has biased composition (low complexity). The disordered stretch occupies residues 892–963 (SNVSRQRSSS…QPQLQQQPRC (72 aa)). Residues 945–954 (PQAPSTPQPQ) are compositionally biased toward pro residues. Serine 1062 bears the Phosphoserine mark.

The protein belongs to the G-protein coupled receptor 3 family. As to quaternary structure, homodimer; disulfide-linked. Interacts with VCP. Interacts with ARRB1. Post-translationally, phosphorylation at Thr-888 by PKC impairs coupling with G(q)/G(11) G-proteins, while it does not affect G(i)/G(o)-coupling. Phosphorylation at Ser-892 by PKC and Ser-899 by PKA promote plasma membrane localization. Ubiquitinated by RNF19A; which induces proteasomal degradation.

Its subcellular location is the cell membrane. With respect to regulation, in resting state, adopts an open conformation, anion-binding promoting the inactive configuration. Upon aromatic amino acid-binding, the groove in the extracellular venus flytrap module is closed, thereby inducing the formation of a novel homodimer interface between subunits. Calcium ions stabilize the active state by enhancing homodimer interactions between membrane-proximal domains to fully activate the receptor. Upon activation, the homodimer adopts an asymmetric configuration of the 7-transmembrane region that primes one protomer for G-protein coupling. G-protein binding expands the transmembrane dimer interface; the restriction imposed by the receptor dimer, in combination with intracellular loop 2 (ICL2), enables G-protein activation by facilitating conformational transition of G-protein alpha. Coupling to different classes of G-proteins results in distinct CASR-G-protein interfaces. In contrast to human protein, not activated by AMG 416, a D-amino acid-containing peptide agonist: this is probably due to the absence of a Cys residue at position 482, which forms a disulfide bond with the AMG 416 peptide agonist in human and that is replaced by a Tyr residue in pig. Functionally, G-protein-coupled receptor that senses changes in the extracellular concentration of calcium ions and plays a key role in maintaining calcium homeostasis. Senses fluctuations in the circulating calcium concentration: activated by elevated circulating calcium, leading to decreased parathyroid hormone (PTH) secretion in parathyroid glands. In kidneys, acts as a key regulator of renal tubular calcium resorption. Ligand binding causes a conformation change that triggers signaling via guanine nucleotide-binding proteins (G-proteins) and modulates the activity of downstream effectors. CASR is coupled with different G(q)/G(11), G(i)/G(o)- or G(s)-classes of G-proteins depending on the context. In the parathyroid and kidney, CASR signals through G(q)/G(11) and G(i)/G(o) G-proteins: G(q)/G(11) coupling activates phospholipase C-beta, releasing diacylglycerol (DAG) and inositol 1,4,5-trisphosphate (IP3) second messengers, while G(i)/G(o) coupling mediates inhibition of adenylate cyclase activity. The G-protein-coupled receptor activity is activated by a co-agonist mechanism: aromatic amino acids, such as Trp or Phe, act concertedly with divalent cations, such as calcium or magnesium, to achieve full receptor activation. Acts as an activator of the NLRP3 inflammasome via G(i)/G(o)-mediated signaling: down-regulation of cyclic AMP (cAMP) relieving NLRP3 inhibition by cAMP. Acts as a regulator of proton-sensing receptor GPR68 in a seesaw manner: CASR-mediated signaling inhibits GPR68 signaling in response to extracellular calcium, while GPR68 inhibits CASR in presence of extracellular protons. This is Extracellular calcium-sensing receptor (CASR) from Sus scrofa (Pig).